The chain runs to 261 residues: Sepiapterin reductase (261 aa).

An N-acetylmethionine modification is found at methionine 1. Glycine 15 to glycine 21 lines the NADP(+) pocket. Phosphoserine is present on serine 33. Arginine 43–serine 44 is a binding site for NADP(+). At serine 46 the chain carries Phosphoserine. Residue aspartate 70 to leucine 71 participates in NADP(+) binding. Residues serine 158–leucine 159 and tyrosine 171 contribute to the substrate site. Lysine 175 is a binding site for NADP(+). Residue serine 196 is modified to Phosphoserine. Glycine 200 is a substrate binding site. Residue leucine 202–glutamine 207 coordinates NADP(+). The residue at position 214 (serine 214) is a Phosphoserine. 2 residues coordinate substrate: lysine 222 and aspartate 258.

Belongs to the sepiapterin reductase family. Homodimer.

It is found in the cytoplasm. It carries out the reaction L-erythro-7,8-dihydrobiopterin + NADP(+) = L-sepiapterin + NADPH + H(+). The enzyme catalyses (6R)-L-erythro-5,6,7,8-tetrahydrobiopterin + 2 NADP(+) = 6-pyruvoyl-5,6,7,8-tetrahydropterin + 2 NADPH + 2 H(+). In terms of biological role, catalyzes the final one or two reductions in tetra-hydrobiopterin biosynthesis to form 5,6,7,8-tetrahydrobiopterin. This Mus musculus (Mouse) protein is Sepiapterin reductase (Spr).